The following is a 374-amino-acid chain: WAT1-related protein At2g39510 (374 aa).

10 consecutive transmembrane segments (helical) span residues 9-29, 38-58, 64-84, 99-119, 135-155, 182-202, 212-232, 249-269, 284-304, and 306-326; these read FITV…AKFA, VLAS…AYFL, PKMT…EPTI, TFTA…AWIF, ILGT…KGPL, GASL…LQAI, SLTA…ALFI, LAAV…QGVI, LSMV…MFLG, and ILGA…KSKD. EamA domains lie at 19 to 147 and 191 to 320; these read YAGL…GAML and ICWA…YSVL. Residues 350 to 374 form a disordered region; sequence SKANAKMDTNDASVVISRPNTNESV.

This sequence belongs to the drug/metabolite transporter (DMT) superfamily. Plant drug/metabolite exporter (P-DME) (TC 2.A.7.4) family.

It localises to the membrane. This is WAT1-related protein At2g39510 from Arabidopsis thaliana (Mouse-ear cress).